Consider the following 90-residue polypeptide: Cell division protein CrgA (90 aa).

Residues 1–26 (MPKAKVTKNSIAPVSSNPSANRTPVK) form a disordered region. Polar residues predominate over residues 7-26 (TKNSIAPVSSNPSANRTPVK). The next 2 helical transmembrane spans lie at 38-58 (VIMF…YLVG) and 69-89 (AWNY…TMGW).

It belongs to the CrgA family.

The protein localises to the cell membrane. In terms of biological role, involved in cell division. The polypeptide is Cell division protein CrgA (Corynebacterium efficiens (strain DSM 44549 / YS-314 / AJ 12310 / JCM 11189 / NBRC 100395)).